The following is a 355-amino-acid chain: Mitochondrial import inner membrane translocase subunit TIM50 (355 aa).

A mitochondrion-targeting transit peptide spans 1–44 (MAASAAVFLRLRSGLRQGARGLCARLATPPPRAPDQAAEIGSRA). The segment at 25 to 61 (RLATPPPRAPDQAAEIGSRAGTKAQTQGPQQQRSSEG) is disordered. Residues 45-67 (GTKAQTQGPQQQRSSEGPSYAKK) are Mitochondrial matrix-facing. The segment covering 47 to 61 (KAQTQGPQQQRSSEG) has biased composition (polar residues). Residues 68-88 (VALWLARLLGAGGTVSVIYIF) form a helical membrane-spanning segment. At 89–355 (GNNAVDENGA…SRLWPRSKQP (267 aa)) the chain is on the mitochondrial intermembrane side. Residues 145–288 (YYQPPYTLVL…LDLSAFLKTI (144 aa)) form the FCP1 homology domain. Phosphoserine is present on Ser343.

It belongs to the TIM50 family. Component of the TIM23 complex at least composed of TIMM23, TIMM17 (TIMM17A or TIMM17B) and TIMM50; within this complex, directly interacts with TIMM23. The complex interacts with the TIMM44 component of the PAM complex and with DNAJC15.

The protein resides in the mitochondrion inner membrane. Essential component of the TIM23 complex, a complex that mediates the translocation of transit peptide-containing proteins across the mitochondrial inner membrane. Has some phosphatase activity in vitro; however such activity may not be relevant in vivo. This Bos taurus (Bovine) protein is Mitochondrial import inner membrane translocase subunit TIM50 (TIMM50).